A 439-amino-acid chain; its full sequence is 3-phosphoshikimate 1-carboxyvinyltransferase (439 aa).

Residues lysine 27, serine 28, and arginine 32 each coordinate 3-phosphoshikimate. Lysine 27 is a phosphoenolpyruvate binding site. The phosphoenolpyruvate site is built by glycine 101 and arginine 130. Serine 175, glutamine 177, aspartate 326, and lysine 353 together coordinate 3-phosphoshikimate. Glutamine 177 contributes to the phosphoenolpyruvate binding site. Aspartate 326 acts as the Proton acceptor in catalysis. Arginine 357 and arginine 399 together coordinate phosphoenolpyruvate.

This sequence belongs to the EPSP synthase family. In terms of assembly, monomer.

The protein localises to the cytoplasm. The enzyme catalyses 3-phosphoshikimate + phosphoenolpyruvate = 5-O-(1-carboxyvinyl)-3-phosphoshikimate + phosphate. The protein operates within metabolic intermediate biosynthesis; chorismate biosynthesis; chorismate from D-erythrose 4-phosphate and phosphoenolpyruvate: step 6/7. Functionally, catalyzes the transfer of the enolpyruvyl moiety of phosphoenolpyruvate (PEP) to the 5-hydroxyl of shikimate-3-phosphate (S3P) to produce enolpyruvyl shikimate-3-phosphate and inorganic phosphate. This Synechococcus sp. (strain CC9311) protein is 3-phosphoshikimate 1-carboxyvinyltransferase.